The primary structure comprises 136 residues: Transport protein particle 20 kDa subunit (136 aa).

Belongs to the TRAPP small subunits family. Sedlin subfamily.

The protein resides in the cytoplasm. Its subcellular location is the golgi apparatus. The protein localises to the cis-Golgi network. It is found in the endoplasmic reticulum. Functionally, component of the TRAPP I and TRAPP II complexes. TRAPP I plays a key role in the late stages of endoplasmic reticulum to Golgi traffic. TRAPP II seems to play a role in intra-Golgi transport. This chain is Transport protein particle 20 kDa subunit (trs20), found in Schizosaccharomyces pombe (strain 972 / ATCC 24843) (Fission yeast).